A 197-amino-acid polypeptide reads, in one-letter code: Probable chorismate pyruvate-lyase (197 aa).

Residues Arg66, Leu104, and Glu169 each coordinate substrate.

This sequence belongs to the UbiC family.

The protein localises to the cytoplasm. It catalyses the reaction chorismate = 4-hydroxybenzoate + pyruvate. It functions in the pathway cofactor biosynthesis; ubiquinone biosynthesis. Removes the pyruvyl group from chorismate, with concomitant aromatization of the ring, to provide 4-hydroxybenzoate (4HB) for the ubiquinone pathway. The sequence is that of Probable chorismate pyruvate-lyase from Albidiferax ferrireducens (strain ATCC BAA-621 / DSM 15236 / T118) (Rhodoferax ferrireducens).